An 89-amino-acid polypeptide reads, in one-letter code: Small ribosomal subunit protein uS15 (89 aa).

The protein belongs to the universal ribosomal protein uS15 family. In terms of assembly, part of the 30S ribosomal subunit. Forms a bridge to the 50S subunit in the 70S ribosome, contacting the 23S rRNA.

In terms of biological role, one of the primary rRNA binding proteins, it binds directly to 16S rRNA where it helps nucleate assembly of the platform of the 30S subunit by binding and bridging several RNA helices of the 16S rRNA. Forms an intersubunit bridge (bridge B4) with the 23S rRNA of the 50S subunit in the ribosome. The polypeptide is Small ribosomal subunit protein uS15 (Desulfosudis oleivorans (strain DSM 6200 / JCM 39069 / Hxd3) (Desulfococcus oleovorans)).